Here is a 305-residue protein sequence, read N- to C-terminus: Ribosomal RNA small subunit methyltransferase H (305 aa).

S-adenosyl-L-methionine-binding positions include 46 to 48 (GGH), Asp-65, Phe-92, Asp-108, and His-115.

Belongs to the methyltransferase superfamily. RsmH family.

Its subcellular location is the cytoplasm. It catalyses the reaction cytidine(1402) in 16S rRNA + S-adenosyl-L-methionine = N(4)-methylcytidine(1402) in 16S rRNA + S-adenosyl-L-homocysteine + H(+). Functionally, specifically methylates the N4 position of cytidine in position 1402 (C1402) of 16S rRNA. In Trichormus variabilis (strain ATCC 29413 / PCC 7937) (Anabaena variabilis), this protein is Ribosomal RNA small subunit methyltransferase H.